We begin with the raw amino-acid sequence, 354 residues long: UDP-3-O-acylglucosamine N-acyltransferase (354 aa).

Residue His245 is the Proton acceptor of the active site.

The protein belongs to the transferase hexapeptide repeat family. LpxD subfamily. Homotrimer.

It carries out the reaction a UDP-3-O-[(3R)-3-hydroxyacyl]-alpha-D-glucosamine + a (3R)-hydroxyacyl-[ACP] = a UDP-2-N,3-O-bis[(3R)-3-hydroxyacyl]-alpha-D-glucosamine + holo-[ACP] + H(+). Its pathway is bacterial outer membrane biogenesis; LPS lipid A biosynthesis. Its function is as follows. Catalyzes the N-acylation of UDP-3-O-acylglucosamine using 3-hydroxyacyl-ACP as the acyl donor. Is involved in the biosynthesis of lipid A, a phosphorylated glycolipid that anchors the lipopolysaccharide to the outer membrane of the cell. This chain is UDP-3-O-acylglucosamine N-acyltransferase, found in Anaeromyxobacter sp. (strain K).